The sequence spans 356 residues: UDP-N-acetylglucosamine--N-acetylmuramyl-(pentapeptide) pyrophosphoryl-undecaprenol N-acetylglucosamine transferase (356 aa).

UDP-N-acetyl-alpha-D-glucosamine contacts are provided by residues 15–17, Asn127, Arg163, Ser191, Ile244, 263–268, and Gln288; these read TGG and ALTVSE.

This sequence belongs to the glycosyltransferase 28 family. MurG subfamily.

It is found in the cell inner membrane. The enzyme catalyses di-trans,octa-cis-undecaprenyl diphospho-N-acetyl-alpha-D-muramoyl-L-alanyl-D-glutamyl-meso-2,6-diaminopimeloyl-D-alanyl-D-alanine + UDP-N-acetyl-alpha-D-glucosamine = di-trans,octa-cis-undecaprenyl diphospho-[N-acetyl-alpha-D-glucosaminyl-(1-&gt;4)]-N-acetyl-alpha-D-muramoyl-L-alanyl-D-glutamyl-meso-2,6-diaminopimeloyl-D-alanyl-D-alanine + UDP + H(+). It functions in the pathway cell wall biogenesis; peptidoglycan biosynthesis. Functionally, cell wall formation. Catalyzes the transfer of a GlcNAc subunit on undecaprenyl-pyrophosphoryl-MurNAc-pentapeptide (lipid intermediate I) to form undecaprenyl-pyrophosphoryl-MurNAc-(pentapeptide)GlcNAc (lipid intermediate II). The protein is UDP-N-acetylglucosamine--N-acetylmuramyl-(pentapeptide) pyrophosphoryl-undecaprenol N-acetylglucosamine transferase of Klebsiella pneumoniae (strain 342).